The following is a 2640-amino-acid chain: Collagen alpha-5(VI) chain (2640 aa).

Residues 1–18 (MKLRLIAFVLILWTETLA) form the signal peptide. Positions 19 to 1426 (DQSPGPGPEY…ACCCTFCKCP (1408 aa)) are nonhelical region. VWFA domains follow at residues 30–209 (DVVF…IKDV), 268–445 (DLIF…LKKI), 474–644 (DIYF…KNEI), 660–829 (DIMF…ESKL), 846–1023 (DIVF…QETL), 1037–1214 (DVIF…VREI), and 1226–1413 (DVVV…LGNI). Asn201, Asn292, and Asn614 each carry an N-linked (GlcNAc...) asparagine glycan. Collagen-like domains follow at residues 1426-1478 (PGIP…GCPG), 1474-1524 (VGCP…DPGN), 1557-1614 (GQKG…GPEG), 1632-1689 (GSQG…GIPG), and 1706-1762 (GDPG…AGQP). The triple-helical region stretch occupies residues 1427-1760 (GIPGPHGTRG…GRRGPKGTAG (334 aa)). The interval 1435-1761 (RGLQASKGSS…RRGPKGTAGQ (327 aa)) is disordered. Basic and acidic residues predominate over residues 1452–1464 (HRGEDGDPGRRGE). Over residues 1537-1567 (DGEKGFPGDPGDPGKDSNIKGQKGEKGERGR) the composition is skewed to basic and acidic residues. Polar residues predominate over residues 1597–1609 (PSGQAGNPGPQGT). The span at 1610–1622 (QGPEGLQGSQGSS) shows a compositional bias: low complexity. A Cell attachment site motif is present at residues 1649–1651 (RGD). Positions 1718 to 1727 (GIPGGPGPKG) are enriched in gly residues. Positions 1740–1750 (RSGLQGSQGPP) are enriched in low complexity. The nonhelical region stretch occupies residues 1761–2640 (QPIYSPCELI…NSKQDGEDAR (880 aa)). 2 VWFA domains span residues 1790 to 1970 (ELVF…KLRR) and 1996 to 2186 (DVAF…VKFL). Short sequence motifs (cell attachment site) lie at residues 2216–2218 (RGD) and 2259–2261 (RGD). Residues 2321–2516 (DVAFLIDASQ…PDLDYVIKFI (196 aa)) form the VWFA 10 domain. Residue Asn2541 is glycosylated (N-linked (GlcNAc...) asparagine). Residues 2617 to 2640 (DKEEPCSAETPAPVNSKQDGEDAR) form a disordered region.

This sequence belongs to the type VI collagen family. Trimers composed of three different chains: alpha-1(VI), alpha-2(VI), and alpha-3(VI) or alpha-4(VI) or alpha-5(VI) or alpha-6(VI). Post-translationally, prolines at the third position of the tripeptide repeating unit (G-X-Y) are hydroxylated in some or all of the chains. In newborn, it is expressed in lung, heart, kidney, muscle, brain, intestine, skin, femur, sternum and calvaria. In adult, it is widely expressed and is detected in lung, heart, kidney, spleen, muscle, ovary, uterus, brain, skin, liver and sternum.

The protein localises to the secreted. Its subcellular location is the extracellular space. It localises to the extracellular matrix. In terms of biological role, collagen VI acts as a cell-binding protein. This is Collagen alpha-5(VI) chain (Col6a5) from Mus musculus (Mouse).